The following is a 327-amino-acid chain: Chlorophenol reductase (327 aa).

An N-terminal signal peptide occupies residues 1–24 (MKKTLGIILSISLAFSVLALPIFA). The region spanning 65 to 110 (TYYTVVSGDFFWQIAAKHGLTIDALAKLNPQIKNVNLIFPGQKILV) is the LysM domain.

Cob(I)alamin serves as cofactor.

Its subcellular location is the secreted. The protein resides in the cell wall. It localises to the cell membrane. Its activity is regulated as follows. Inhibited by sulfide and to a lesser extent by nitrite. In terms of biological role, reductive dechlorination of ortho-chlorophenols. Dechlorinates in the ortho position with respect to the hydroxyl group. The chain is Chlorophenol reductase from Desulfitobacterium hafniense (Desulfitobacterium frappieri).